The following is a 430-amino-acid chain: Ribosomal protein uS12 methylthiotransferase RimO (430 aa).

In terms of domain architecture, MTTase N-terminal spans 1-116; that stretch reads MKIGIKVLGC…IAEAIEKATP (116 aa). [4Fe-4S] cluster contacts are provided by Cys-10, Cys-46, Cys-79, Cys-146, Cys-150, and Cys-153. A Radical SAM core domain is found at 132–362; that stretch reads SCNNSFAYVK…LIFQSQIAYE (231 aa). One can recognise a TRAM domain in the interval 365–430; that stretch reads KRFVGKNLNV…DEYDLKGELI (66 aa).

It belongs to the methylthiotransferase family. RimO subfamily. The cofactor is [4Fe-4S] cluster.

Its subcellular location is the cytoplasm. The catalysed reaction is L-aspartate(89)-[ribosomal protein uS12]-hydrogen + (sulfur carrier)-SH + AH2 + 2 S-adenosyl-L-methionine = 3-methylsulfanyl-L-aspartate(89)-[ribosomal protein uS12]-hydrogen + (sulfur carrier)-H + 5'-deoxyadenosine + L-methionine + A + S-adenosyl-L-homocysteine + 2 H(+). Catalyzes the methylthiolation of an aspartic acid residue of ribosomal protein uS12. The chain is Ribosomal protein uS12 methylthiotransferase RimO from Pseudothermotoga lettingae (strain ATCC BAA-301 / DSM 14385 / NBRC 107922 / TMO) (Thermotoga lettingae).